Consider the following 224-residue polypeptide: MSVYKHAPSRVRLRQTRSTVVKGRSGSLSWRRVRTGDLGLAVWGGREEYRAVKPGTPGIQPKGDMMTVTVVDAGPGRVSRSVEVAAPAAELFAIVADPRRHRELDGSGTVRGNIKVPAKLVVGSKFSTKMKLFGLPYRITSRVTALKPNELVEWSHPLGHRWRWEFESLSPTLTRVTETFDYHAAGAIKNGLKFYEMTGFAKSNAAGIEATLAKLSDQYARGRA.

This is an uncharacterized protein from Mycobacterium tuberculosis (strain ATCC 25618 / H37Rv).